The chain runs to 703 residues: Bifunctional arginine dihydrolase/ornithine cyclodeaminase AgrE (703 aa).

The segment at 10–269 is arginine dihydrolase; the sequence is CPPDHYDVDY…GAAKCLTLRV (260 aa). 5 residues coordinate L-arginine: N22, D65, N71, R90, and R139. N22 is an L-ornithine binding site. Positions 90, 139, and 168 each coordinate L-ornithine. The active-site Proton donor/acceptor is the H168. L-arginine contacts are provided by D170 and A258. Position 264 (C264) interacts with L-ornithine. C264 functions as the Nucleophile in the catalytic mechanism. The tract at residues 285–694 is ornithine cyclodeaminase; the sequence is SRIIRIEGHL…SLLTQQLDKL (410 aa). NAD(+) is bound by residues N524, A525, D603, S635, M636, L637, H638, D656, D679, and V680.

It in the N-terminal section; belongs to the DDAH family. The protein in the C-terminal section; belongs to the AgrE/ArgZ ornithine cyclodeaminase family. As to quaternary structure, homotetramer. NAD(+) is required as a cofactor.

The enzyme catalyses L-arginine + 2 H2O + 2 H(+) = L-ornithine + 2 NH4(+) + CO2. It carries out the reaction L-ornithine = L-proline + NH4(+). With respect to regulation, ornithine cyclodeaminase activity is inhibited by ATP. Its function is as follows. Bifunctional enzyme involved in a cyanobacterial arginine utilization pathway that produces glutamate and enables cellular adaptation to nitrogen fluctuations. Catalyzes the hydrolysis of arginine to ornithine, with the release of ammonia and carbon dioxide. Then, catalyzes the conversion of ornithine to proline, with the release of ammonia. This chain is Bifunctional arginine dihydrolase/ornithine cyclodeaminase AgrE, found in Nostoc sp. (strain PCC 7120 / SAG 25.82 / UTEX 2576).